The following is a 94-amino-acid chain: uncharacterized protein (94 aa).

Residues 1 to 26 (MNDQRDQAVPWATGLAVAGFVAAVIA) form the signal peptide. 2 consecutive transmembrane segments (helical) span residues 42 to 62 (LLAVGLNIVAVSGLAPTLWGW) and 71 to 91 (FVLGAAVGVAGAWLALLALTL).

The protein resides in the cell membrane. This is an uncharacterized protein from Mycobacterium tuberculosis (strain CDC 1551 / Oshkosh).